The chain runs to 278 residues: Large ribosomal subunit protein uL2 (278 aa).

The span at 210–219 (RKRWLGKRPQ) shows a compositional bias: basic residues. The tract at residues 210–278 (RKRWLGKRPQ…LIIRHRKGSK (69 aa)) is disordered. Residues 258–270 (KTRDVKKASEKLI) show a composition bias toward basic and acidic residues.

The protein belongs to the universal ribosomal protein uL2 family. Part of the 50S ribosomal subunit. Forms a bridge to the 30S subunit in the 70S ribosome.

Its function is as follows. One of the primary rRNA binding proteins. Required for association of the 30S and 50S subunits to form the 70S ribosome, for tRNA binding and peptide bond formation. It has been suggested to have peptidyltransferase activity; this is somewhat controversial. Makes several contacts with the 16S rRNA in the 70S ribosome. This Lactobacillus acidophilus (strain ATCC 700396 / NCK56 / N2 / NCFM) protein is Large ribosomal subunit protein uL2.